Consider the following 519-residue polypeptide: ATP synthase subunit alpha (519 aa).

174-181 serves as a coordination point for ATP; sequence GDRQTGKT.

This sequence belongs to the ATPase alpha/beta chains family. F-type ATPases have 2 components, CF(1) - the catalytic core - and CF(0) - the membrane proton channel. CF(1) has five subunits: alpha(3), beta(3), gamma(1), delta(1), epsilon(1). CF(0) has three main subunits: a(1), b(2) and c(9-12). The alpha and beta chains form an alternating ring which encloses part of the gamma chain. CF(1) is attached to CF(0) by a central stalk formed by the gamma and epsilon chains, while a peripheral stalk is formed by the delta and b chains.

The protein resides in the cell inner membrane. It carries out the reaction ATP + H2O + 4 H(+)(in) = ADP + phosphate + 5 H(+)(out). Produces ATP from ADP in the presence of a proton gradient across the membrane. The alpha chain is a regulatory subunit. The protein is ATP synthase subunit alpha of Paracidovorax citrulli (strain AAC00-1) (Acidovorax citrulli).